Consider the following 316-residue polypeptide: tRNA pseudouridine synthase B (316 aa).

D38 (nucleophile) is an active-site residue. A PUA domain is found at 238 to 312 (YPEVIVKSSA…PVCVLARQAG (75 aa)).

It belongs to the pseudouridine synthase TruB family. Type 1 subfamily.

The catalysed reaction is uridine(55) in tRNA = pseudouridine(55) in tRNA. Responsible for synthesis of pseudouridine from uracil-55 in the psi GC loop of transfer RNAs. The sequence is that of tRNA pseudouridine synthase B from Pelotomaculum thermopropionicum (strain DSM 13744 / JCM 10971 / SI).